We begin with the raw amino-acid sequence, 29 residues long: Lambda-theraphotoxin-Ec2c (29 aa).

Intrachain disulfides connect Cys-2/Cys-16, Cys-9/Cys-21, and Cys-15/Cys-25.

Belongs to the neurotoxin 30 (phrixotoxin) family. In terms of tissue distribution, expressed by the venom gland.

The protein localises to the secreted. Both insecticidal and vertebrate neurotoxin that potently blocks insect calcium-activated potassium (BKCa) channels (Slo-type) in cockroach dorsal unpaired median (DUM) neurons (IC(50)=24.6 nM). This occurs in the absence of any shifts in the voltage dependence of activation. May interact with the turret and/or loop region of the external entrance to the channel and does not project deeply into the pore of the channel. Also shows toxicity to mice by introcerebroventicular injection. The polypeptide is Lambda-theraphotoxin-Ec2c (Eucratoscelus constrictus (African red-rump baboon spider)).